A 159-amino-acid chain; its full sequence is Large ribosomal subunit protein uL15 (159 aa).

A compositionally biased stretch (basic and acidic residues) spans 1–13 (MRIHEVTPKEGST). The tract at residues 1–51 (MRIHEVTPKEGSTKRRRRVGRGISAGQGASCGFGMRGQKSRSGTGTKAGFE) is disordered. The span at 23 to 35 (ISAGQGASCGFGM) shows a compositional bias: gly residues.

The protein belongs to the universal ribosomal protein uL15 family. Part of the 50S ribosomal subunit.

Functionally, binds to the 23S rRNA. This Rippkaea orientalis (strain PCC 8801 / RF-1) (Cyanothece sp. (strain PCC 8801)) protein is Large ribosomal subunit protein uL15.